The primary structure comprises 193 residues: dCTP deaminase, dUMP-forming (193 aa).

DCTP contacts are provided by residues 101-106 (KSSLGR), Asp119, 127-129 (TLE), Gln148, Tyr162, and Gln174. Glu129 acts as the Proton donor/acceptor in catalysis. Residues 160 to 193 (TPYGSGSLGSKYQGQRGPTPSKGYLNFSSEQDSD) form a disordered region. The span at 167–177 (LGSKYQGQRGP) shows a compositional bias: polar residues.

Belongs to the dCTP deaminase family. As to quaternary structure, homotrimer.

It carries out the reaction dCTP + 2 H2O = dUMP + NH4(+) + diphosphate. It functions in the pathway pyrimidine metabolism; dUMP biosynthesis; dUMP from dCTP: step 1/1. Its function is as follows. Bifunctional enzyme that catalyzes both the deamination of dCTP to dUTP and the hydrolysis of dUTP to dUMP without releasing the toxic dUTP intermediate. The sequence is that of dCTP deaminase, dUMP-forming from Corynebacterium efficiens (strain DSM 44549 / YS-314 / AJ 12310 / JCM 11189 / NBRC 100395).